Here is a 904-residue protein sequence, read N- to C-terminus: Phosphoenolpyruvate carboxylase (904 aa).

The tract at residues isoleucine 52–arginine 71 is disordered. Residues proline 60–glycine 70 show a composition bias toward polar residues. Catalysis depends on residues histidine 151 and lysine 570.

It belongs to the PEPCase type 1 family. It depends on Mg(2+) as a cofactor.

The catalysed reaction is oxaloacetate + phosphate = phosphoenolpyruvate + hydrogencarbonate. In terms of biological role, forms oxaloacetate, a four-carbon dicarboxylic acid source for the tricarboxylic acid cycle. The protein is Phosphoenolpyruvate carboxylase of Xanthomonas euvesicatoria pv. vesicatoria (strain 85-10) (Xanthomonas campestris pv. vesicatoria).